The following is a 369-amino-acid chain: Cobalt-precorrin-5B C(1)-methyltransferase (369 aa).

The protein belongs to the CbiD family.

It catalyses the reaction Co-precorrin-5B + S-adenosyl-L-methionine = Co-precorrin-6A + S-adenosyl-L-homocysteine. The protein operates within cofactor biosynthesis; adenosylcobalamin biosynthesis; cob(II)yrinate a,c-diamide from sirohydrochlorin (anaerobic route): step 6/10. Catalyzes the methylation of C-1 in cobalt-precorrin-5B to form cobalt-precorrin-6A. This is Cobalt-precorrin-5B C(1)-methyltransferase from Prosthecochloris aestuarii (strain DSM 271 / SK 413).